Here is an 83-residue protein sequence, read N- to C-terminus: Small ribosomal subunit protein eS21 (83 aa).

The protein belongs to the eukaryotic ribosomal protein eS21 family. As to quaternary structure, component of the 40S small ribosomal subunit.

The protein resides in the cytoplasm. It is found in the cytosol. It localises to the rough endoplasmic reticulum. Component of the small ribosomal subunit. The ribosome is a large ribonucleoprotein complex responsible for the synthesis of proteins in the cell. The protein is Small ribosomal subunit protein eS21 (rps21) of Xenopus tropicalis (Western clawed frog).